The following is a 446-amino-acid chain: Eukaryotic translation initiation factor 2 subunit gamma (446 aa).

The tr-type G domain maps to 21–227; sequence QATINIGTIG…YIVKKIPIPV (207 aa). The interval 30-37 is G1; that stretch reads GHVAHGKS. 33–38 is a GTP binding site; the sequence is AHGKST. The segment at 58–62 is G2; the sequence is NITIK. The tract at residues 114-117 is G3; the sequence is DCPG. GTP is bound by residues 170–173 and 205–207; these read NKVD and SAQ. The G4 stretch occupies residues 170 to 173; that stretch reads NKVD. The interval 205 to 207 is G5; sequence SAQ. Residues 436–446 are interacts with cdc123; it reads AKVVEGKTLKV.

This sequence belongs to the TRAFAC class translation factor GTPase superfamily. Classic translation factor GTPase family. EIF2G subfamily. In terms of assembly, eukaryotic translation initiation factor 2 eIF2 is a heterotrimeric complex composed of an alpha, a beta and a gamma subunit. The factors eIF-1, eIF-2, eIF-3, TIF5/eIF-5 and methionyl-tRNAi form a multifactor complex (MFC) that may bind to the 40S ribosome. Interacts with cdc123; the interaction is direct.

The protein localises to the cytoplasm. Its subcellular location is the cytosol. It catalyses the reaction GTP + H2O = GDP + phosphate + H(+). Functionally, as a subunit of eukaryotic initiation factor 2 eIF2, involved in the early steps of protein synthesis. In the presence of GTP, eIF-2 forms a ternary complex with initiator tRNA Met-tRNAi and then recruits the 40S ribosomal complex and initiation factors eIF-1, eIF-1A and eIF-3 to form the 43S pre-initiation complex (43S PIC), a step that determines the rate of protein translation. The 43S PIC binds to mRNA and scans downstream to the initiation codon, where it forms a 48S initiation complex by codon-anticodon base pairing. This leads to the displacement of eIF-1 to allow GTPase-activating protein (GAP) eIF-5-mediated hydrolysis of eIF2-bound GTP. Hydrolysis of GTP and release of Pi, which makes GTP hydrolysis irreversible, causes the release of the eIF-2-GDP binary complex from the 40S subunit, an event that is essential for the subsequent joining of the 60S ribosomal subunit to form an elongation-competent 80S ribosome. In order for eIF-2 to recycle and catalyze another round of initiation, the GDP bound to eIF-2 must be exchanged with GTP by way of a reaction catalyzed by GDP-GTP exchange factor (GEF) eIF-2B. The sequence is that of Eukaryotic translation initiation factor 2 subunit gamma (tif213) from Schizosaccharomyces pombe (strain 972 / ATCC 24843) (Fission yeast).